A 364-amino-acid chain; its full sequence is Alanine racemase (364 aa).

Catalysis depends on K35, which acts as the Proton acceptor; specific for D-alanine. K35 is modified (N6-(pyridoxal phosphate)lysine). R131 is a substrate binding site. Y256 acts as the Proton acceptor; specific for L-alanine in catalysis. M304 is a substrate binding site.

This sequence belongs to the alanine racemase family. The cofactor is pyridoxal 5'-phosphate.

It carries out the reaction L-alanine = D-alanine. Its pathway is amino-acid biosynthesis; D-alanine biosynthesis; D-alanine from L-alanine: step 1/1. In terms of biological role, catalyzes the interconversion of L-alanine and D-alanine. May also act on other amino acids. The sequence is that of Alanine racemase (alr) from Halorhodospira halophila (strain DSM 244 / SL1) (Ectothiorhodospira halophila (strain DSM 244 / SL1)).